The chain runs to 105 residues: uncharacterized protein (105 aa).

This is an uncharacterized protein from Mycobacterium bovis (strain ATCC BAA-935 / AF2122/97).